Reading from the N-terminus, the 1200-residue chain is Chromosome partition protein Smc (1200 aa).

Position 33-40 (33-40 (PNGSGKSN)) interacts with ATP. Positions 90–109 (GENLSEPGANHNGNGNGAKI) are disordered. The stretch at 202–528 (EVQDREERCQ…AASQAQQEVQ (327 aa)) forms a coiled coil. The 115-residue stretch at 542–656 (PGVCGLVAQL…VFDTLVNARN (115 aa)) folds into the SMC hinge domain. Residues 692–1046 (TMVSEDTAEV…ERTELLLRIE (355 aa)) are a coiled coil.

Belongs to the SMC family. Homodimer.

The protein localises to the cytoplasm. In terms of biological role, required for chromosome condensation and partitioning. The chain is Chromosome partition protein Smc from Synechocystis sp. (strain ATCC 27184 / PCC 6803 / Kazusa).